Here is a 101-residue protein sequence, read N- to C-terminus: Aspartyl/glutamyl-tRNA(Asn/Gln) amidotransferase subunit C (101 aa).

The protein belongs to the GatC family. As to quaternary structure, heterotrimer of A, B and C subunits.

It catalyses the reaction L-glutamyl-tRNA(Gln) + L-glutamine + ATP + H2O = L-glutaminyl-tRNA(Gln) + L-glutamate + ADP + phosphate + H(+). The enzyme catalyses L-aspartyl-tRNA(Asn) + L-glutamine + ATP + H2O = L-asparaginyl-tRNA(Asn) + L-glutamate + ADP + phosphate + 2 H(+). Functionally, allows the formation of correctly charged Asn-tRNA(Asn) or Gln-tRNA(Gln) through the transamidation of misacylated Asp-tRNA(Asn) or Glu-tRNA(Gln) in organisms which lack either or both of asparaginyl-tRNA or glutaminyl-tRNA synthetases. The reaction takes place in the presence of glutamine and ATP through an activated phospho-Asp-tRNA(Asn) or phospho-Glu-tRNA(Gln). In Lactobacillus delbrueckii subsp. bulgaricus (strain ATCC 11842 / DSM 20081 / BCRC 10696 / JCM 1002 / NBRC 13953 / NCIMB 11778 / NCTC 12712 / WDCM 00102 / Lb 14), this protein is Aspartyl/glutamyl-tRNA(Asn/Gln) amidotransferase subunit C.